The primary structure comprises 193 residues: GTP cyclohydrolase-2 (193 aa).

Position 45–49 (45–49 (RIHSE)) interacts with GTP. 3 residues coordinate Zn(2+): Cys50, Cys61, and Cys63. GTP is bound by residues Gln66, 87–89 (EGR), and Thr109. The active-site Proton acceptor is the Asp121. Arg123 (nucleophile) is an active-site residue. GTP-binding residues include Thr144 and Lys149.

This sequence belongs to the GTP cyclohydrolase II family. Zn(2+) serves as cofactor.

The catalysed reaction is GTP + 4 H2O = 2,5-diamino-6-hydroxy-4-(5-phosphoribosylamino)-pyrimidine + formate + 2 phosphate + 3 H(+). The protein operates within cofactor biosynthesis; riboflavin biosynthesis; 5-amino-6-(D-ribitylamino)uracil from GTP: step 1/4. Functionally, catalyzes the conversion of GTP to 2,5-diamino-6-ribosylamino-4(3H)-pyrimidinone 5'-phosphate (DARP), formate and pyrophosphate. In Campylobacter hominis (strain ATCC BAA-381 / DSM 21671 / CCUG 45161 / LMG 19568 / NCTC 13146 / CH001A), this protein is GTP cyclohydrolase-2.